Here is a 109-residue protein sequence, read N- to C-terminus: Hainantoxin-XVIII (109 aa).

Positions 1 to 18 (MKLSIIIIATSLVIAVVA) are cleaved as a signal peptide. The propeptide occupies 19-46 (FPSKDSKAIENDKTEQRMEIVVQETARA). 4 disulfide bridges follow: C47/C62, C55/C68, C59/C108, and C61/C81.

This sequence belongs to the neurotoxin 25 family. F7 subfamily. In terms of tissue distribution, expressed by the venom gland.

It is found in the secreted. Functionally, putative ion channel inhibitor. The chain is Hainantoxin-XVIII from Cyriopagopus hainanus (Chinese bird spider).